A 480-amino-acid polypeptide reads, in one-letter code: tRNA-2-methylthio-N(6)-dimethylallyladenosine synthase (480 aa).

The MTTase N-terminal domain occupies 3–120 (KKLYIKTWGC…LPEMLNQLQH (118 aa)). Cys12, Cys49, Cys83, Cys157, Cys161, and Cys164 together coordinate [4Fe-4S] cluster. Residues 143-375 (KADGASAFVS…QEQITHQALR (233 aa)) form the Radical SAM core domain. Residues 378–441 (RQMLNTEQRV…ANSLRGELVR (64 aa)) enclose the TRAM domain.

This sequence belongs to the methylthiotransferase family. MiaB subfamily. As to quaternary structure, monomer. The cofactor is [4Fe-4S] cluster.

The protein resides in the cytoplasm. The catalysed reaction is N(6)-dimethylallyladenosine(37) in tRNA + (sulfur carrier)-SH + AH2 + 2 S-adenosyl-L-methionine = 2-methylsulfanyl-N(6)-dimethylallyladenosine(37) in tRNA + (sulfur carrier)-H + 5'-deoxyadenosine + L-methionine + A + S-adenosyl-L-homocysteine + 2 H(+). Catalyzes the methylthiolation of N6-(dimethylallyl)adenosine (i(6)A), leading to the formation of 2-methylthio-N6-(dimethylallyl)adenosine (ms(2)i(6)A) at position 37 in tRNAs that read codons beginning with uridine. In Colwellia psychrerythraea (strain 34H / ATCC BAA-681) (Vibrio psychroerythus), this protein is tRNA-2-methylthio-N(6)-dimethylallyladenosine synthase.